We begin with the raw amino-acid sequence, 267 residues long: 3-oxoadipate enol-lactonase 2 (267 aa).

It carries out the reaction (4,5-dihydro-5-oxofuran-2-yl)-acetate + H2O = 3-oxoadipate + H(+). It participates in aromatic compound metabolism; beta-ketoadipate pathway; 3-oxoadipate from 5-oxo-4,5-dihydro-2-furylacetate: step 1/1. The sequence is that of 3-oxoadipate enol-lactonase 2 (catD) from Acinetobacter baylyi (strain ATCC 33305 / BD413 / ADP1).